A 585-amino-acid chain; its full sequence is Probable phosphoglucomutase, cytoplasmic 2 (585 aa).

A disordered region spans residues 1-20 (MVSFKVSLVSTSPIDGQKPG). 2 residues coordinate alpha-D-glucose 1,6-bisphosphate: R25 and S124. Residue S124 is the Phosphoserine intermediate of the active site. Mg(2+)-binding residues include S124, D301, D303, and D305. Residue S124 is modified to Phosphoserine. D305, R306, T369, E388, S390, and K401 together coordinate alpha-D-glucose 1,6-bisphosphate.

It belongs to the phosphohexose mutase family. In terms of assembly, monomer. Mg(2+) is required as a cofactor.

The protein localises to the cytoplasm. The catalysed reaction is alpha-D-glucose 1-phosphate = alpha-D-glucose 6-phosphate. It catalyses the reaction O-phospho-L-seryl-[protein] + alpha-D-glucose 1-phosphate = alpha-D-glucose 1,6-bisphosphate + L-seryl-[protein]. The enzyme catalyses alpha-D-glucose 1,6-bisphosphate + L-seryl-[protein] = O-phospho-L-seryl-[protein] + alpha-D-glucose 6-phosphate. Functionally, catalyzes the reversible isomerization of alpha-D-glucose 1-phosphate to alpha-D-glucose 6-phosphate. The mechanism proceeds via the intermediate compound alpha-D-glucose 1,6-bisphosphate. This enzyme participates in both the breakdown and synthesis of glucose. The protein is Probable phosphoglucomutase, cytoplasmic 2 of Arabidopsis thaliana (Mouse-ear cress).